The sequence spans 359 residues: Short chain dehydrogenase resG (359 aa).

Lys-87, Asp-110, Asn-137, Tyr-237, and Lys-241 together coordinate NADP(+). The active-site Proton donor is the Tyr-237. Catalysis depends on Lys-241, which acts as the Lowers pKa of active site Tyr.

The protein belongs to the short-chain dehydrogenases/reductases (SDR) family.

It functions in the pathway antifungal biosynthesis. Its function is as follows. Short chain dehydrogenase; part of the gene cluster that mediates the biosynthesis of the tetrahydropyranyl antifungal agent restricticin that acts as an inhibitor of CYP51 and blocks the ergosterol biosynthesis. The highly reducing polyketide synthase resH, the short chain dehydrogenase resG, the cyclase resF, the FAD-dependent monooxygenase resA and the enoylreductase resD are required to generate the first stable intermediate desmethylrestrictinol. ResH with resD biosynthesize the first polyketide chain intermediate that is reduced by resG, followed by epoxidation by resA before 6-endo cyclization via epoxide opening by resF leads to desmethylrestrictinol. The methyltransferase resE then catalyzes the C4 O-methylation of desmethylrestrictinol to produce restrictinol, and the nonribosomal peptide synthetase resC catalyzes the C3 esterification of restrictinol with glycine that leads to restricticin. In Aspergillus sclerotiorum, this protein is Short chain dehydrogenase resG.